Reading from the N-terminus, the 245-residue chain is Orotidine 5'-phosphate decarboxylase (245 aa).

Substrate is bound by residues aspartate 22, lysine 44, 71–80, threonine 131, arginine 192, glutamine 201, glycine 221, and arginine 222; that span reads DLKFHDIPNT. Lysine 73 (proton donor) is an active-site residue.

The protein belongs to the OMP decarboxylase family. Type 1 subfamily. Homodimer.

The enzyme catalyses orotidine 5'-phosphate + H(+) = UMP + CO2. It participates in pyrimidine metabolism; UMP biosynthesis via de novo pathway; UMP from orotate: step 2/2. Its function is as follows. Catalyzes the decarboxylation of orotidine 5'-monophosphate (OMP) to uridine 5'-monophosphate (UMP). This is Orotidine 5'-phosphate decarboxylase from Escherichia coli O6:K15:H31 (strain 536 / UPEC).